Here is a 315-residue protein sequence, read N- to C-terminus: Methionyl-tRNA formyltransferase (315 aa).

The tract at residues 2 to 189 (SDSLRIIFAG…LITTLKQLAD (188 aa)) is N-terminal domain. A (6S)-5,6,7,8-tetrahydrofolate-binding site is contributed by 113 to 116 (SLLP). Residues 210–315 (KEEARIDWSL…EWFIPGNRLA (106 aa)) are C-terminal domain.

The protein belongs to the Fmt family.

The enzyme catalyses L-methionyl-tRNA(fMet) + (6R)-10-formyltetrahydrofolate = N-formyl-L-methionyl-tRNA(fMet) + (6S)-5,6,7,8-tetrahydrofolate + H(+). Functionally, attaches a formyl group to the free amino group of methionyl-tRNA(fMet). The formyl group appears to play a dual role in the initiator identity of N-formylmethionyl-tRNA by promoting its recognition by IF2 and preventing the misappropriation of this tRNA by the elongation apparatus. This chain is Methionyl-tRNA formyltransferase, found in Salmonella choleraesuis (strain SC-B67).